Reading from the N-terminus, the 259-residue chain is HTH-type transcriptional regulator TtgV (259 aa).

Residues 14-76 form the HTH iclR-type domain; sequence IQVIARAASI…GPAGGFRLGP (63 aa). The segment at residues 36 to 59 is a DNA-binding region (H-T-H motif); the sequence is LAAIAQLVGLPRSTVQRIINALEE. The 165-residue stretch at 89–253 folds into the IclR-ED domain; sequence ILSLVKPYLR…KLNIERAIGR (165 aa).

Represses the expression of the ttgGHI and ttgVW operons. Binds to the ttgGHI / ttgVW intergenic region, probably preventing binding of RNA polymerase; ttgV dissociates from this region in the presence of 1-hexanol. The sequence is that of HTH-type transcriptional regulator TtgV (ttgV) from Pseudomonas putida (strain DOT-T1E).